The following is a 315-amino-acid chain: tRNA-dihydrouridine(16) synthase (315 aa).

FMN contacts are provided by residues 7-9 (PME) and glutamine 68. Residue cysteine 98 is the Proton donor of the active site. FMN is bound by residues lysine 139, 199–201 (NGE), and 223–224 (GR).

This sequence belongs to the Dus family. DusC subfamily. FMN serves as cofactor.

The enzyme catalyses 5,6-dihydrouridine(16) in tRNA + NADP(+) = uridine(16) in tRNA + NADPH + H(+). It catalyses the reaction 5,6-dihydrouridine(16) in tRNA + NAD(+) = uridine(16) in tRNA + NADH + H(+). In terms of biological role, catalyzes the synthesis of 5,6-dihydrouridine (D), a modified base found in the D-loop of most tRNAs, via the reduction of the C5-C6 double bond in target uridines. Specifically modifies U16 in tRNAs. The sequence is that of tRNA-dihydrouridine(16) synthase from Aquipseudomonas alcaligenes (Pseudomonas alcaligenes).